The sequence spans 900 residues: Nitrate reductase [NADH] (900 aa).

C172 provides a ligand contact to Mo-molybdopterin. One can recognise a Cytochrome b5 heme-binding domain in the interval 521–596; it reads TKMYSLSEVK…LEDYRVGELI (76 aa). Heme is bound by residues H556 and H579. The FAD-binding FR-type domain maps to 644 to 756; the sequence is REKIPCKLIS…KGPLGHIEYT (113 aa). FAD is bound by residues 696-699, 713-717, F718, F725, 730-732, and T783; these read RAYT, VVKVY, and AMS.

The protein belongs to the nitrate reductase family. In terms of assembly, homodimer. Requires FAD as cofactor. The cofactor is heme. It depends on Mo-molybdopterin as a cofactor.

It carries out the reaction nitrite + NAD(+) + H2O = nitrate + NADH + H(+). Its function is as follows. Nitrate reductase is a key enzyme involved in the first step of nitrate assimilation in plants, fungi and bacteria. This is Nitrate reductase [NADH] (NIA) from Lotus japonicus (Lotus corniculatus var. japonicus).